The following is a 364-amino-acid chain: Alanine racemase (364 aa).

K34 acts as the Proton acceptor; specific for D-alanine in catalysis. Position 34 is an N6-(pyridoxal phosphate)lysine (K34). R129 is a substrate binding site. Y259 functions as the Proton acceptor; specific for L-alanine in the catalytic mechanism. M307 serves as a coordination point for substrate.

This sequence belongs to the alanine racemase family. Pyridoxal 5'-phosphate serves as cofactor.

It catalyses the reaction L-alanine = D-alanine. It participates in amino-acid biosynthesis; D-alanine biosynthesis; D-alanine from L-alanine: step 1/1. Its function is as follows. Catalyzes the interconversion of L-alanine and D-alanine. May also act on other amino acids. The protein is Alanine racemase (alr) of Coxiella burnetii (strain RSA 331 / Henzerling II).